We begin with the raw amino-acid sequence, 98 residues long: NADH-ubiquinone oxidoreductase chain 4L (98 aa).

3 helical membrane-spanning segments follow: residues 1–21 (MSMV…GLLM), 29–49 (SLLC…MTIL), and 61–81 (IILL…LVMV).

Belongs to the complex I subunit 4L family. Core subunit of respiratory chain NADH dehydrogenase (Complex I) which is composed of 45 different subunits.

It is found in the mitochondrion inner membrane. It catalyses the reaction a ubiquinone + NADH + 5 H(+)(in) = a ubiquinol + NAD(+) + 4 H(+)(out). Its function is as follows. Core subunit of the mitochondrial membrane respiratory chain NADH dehydrogenase (Complex I) which catalyzes electron transfer from NADH through the respiratory chain, using ubiquinone as an electron acceptor. Part of the enzyme membrane arm which is embedded in the lipid bilayer and involved in proton translocation. This is NADH-ubiquinone oxidoreductase chain 4L (MT-ND4L) from Arctocephalus australis (South American fur seal).